The primary structure comprises 142 residues: Acidic phospholipase A2 KBf-grIB (142 aa).

Intrachain disulfides connect C28–C94, C44–C141, C46–C62, C61–C122, C68–C115, C78–C108, and C101–C113. The Ca(2+) site is built by Y45, G47, and G49. H65 is an active-site residue. D66 lines the Ca(2+) pocket. D116 is a catalytic residue.

The protein belongs to the phospholipase A2 family. Group I subfamily. D49 sub-subfamily. Ca(2+) serves as cofactor. In terms of tissue distribution, expressed by the venom gland.

The protein resides in the secreted. It carries out the reaction a 1,2-diacyl-sn-glycero-3-phosphocholine + H2O = a 1-acyl-sn-glycero-3-phosphocholine + a fatty acid + H(+). Functionally, PLA2 catalyzes the calcium-dependent hydrolysis of the 2-acyl groups in 3-sn-phosphoglycerides. The polypeptide is Acidic phospholipase A2 KBf-grIB (Bungarus fasciatus (Banded krait)).